We begin with the raw amino-acid sequence, 623 residues long: UvrABC system protein C (623 aa).

A GIY-YIG domain is found at 12-91 (PSPGVYLMKS…IKQHRPKYNI (80 aa)). One can recognise a UVR domain in the interval 201 to 236 (TEVARLYRSKMNLAAEQMRYEDAARYRDLLRAIEVT). The disordered stretch occupies residues 603-623 (RLHGSPLPNPPPPGEGAMDRK).

This sequence belongs to the UvrC family. In terms of assembly, interacts with UvrB in an incision complex.

The protein localises to the cytoplasm. Its function is as follows. The UvrABC repair system catalyzes the recognition and processing of DNA lesions. UvrC both incises the 5' and 3' sides of the lesion. The N-terminal half is responsible for the 3' incision and the C-terminal half is responsible for the 5' incision. This chain is UvrABC system protein C, found in Citrifermentans bemidjiense (strain ATCC BAA-1014 / DSM 16622 / JCM 12645 / Bem) (Geobacter bemidjiensis).